The sequence spans 198 residues: Outer-membrane lipoprotein carrier protein (198 aa).

The first 17 residues, 1 to 17, serve as a signal peptide directing secretion; that stretch reads MKKFLFSLCLLSSTVLA.

The protein belongs to the LolA family. As to quaternary structure, monomer.

Its subcellular location is the periplasm. Participates in the translocation of lipoproteins from the inner membrane to the outer membrane. Only forms a complex with a lipoprotein if the residue after the N-terminal Cys is not an aspartate (The Asp acts as a targeting signal to indicate that the lipoprotein should stay in the inner membrane). The protein is Outer-membrane lipoprotein carrier protein of Aliivibrio fischeri (strain ATCC 700601 / ES114) (Vibrio fischeri).